Consider the following 249-residue polypeptide: Chitooligosaccharide deacetylase (249 aa).

Mg(2+) contacts are provided by histidine 61 and histidine 125.

The protein belongs to the YdjC deacetylase family. ChbG subfamily. Homodimer. Mg(2+) serves as cofactor.

It localises to the cytoplasm. It carries out the reaction N,N'-diacetylchitobiose + H2O = N-acetyl-beta-D-glucosaminyl-(1-&gt;4)-D-glucosamine + acetate. The enzyme catalyses diacetylchitobiose-6'-phosphate + H2O = N'-monoacetylchitobiose-6'-phosphate + acetate. It participates in glycan degradation; chitin degradation. Functionally, involved in the degradation of chitin. ChbG is essential for growth on the acetylated chitooligosaccharides chitobiose and chitotriose but is dispensable for growth on cellobiose and chitosan dimer, the deacetylated form of chitobiose. Deacetylation of chitobiose-6-P and chitotriose-6-P is necessary for both the activation of the chb promoter by the regulatory protein ChbR and the hydrolysis of phosphorylated beta-glucosides by the phospho-beta-glucosidase ChbF. Catalyzes the removal of only one acetyl group from chitobiose-6-P to yield monoacetylchitobiose-6-P, the inducer of ChbR and the substrate of ChbF. This Escherichia coli O9:H4 (strain HS) protein is Chitooligosaccharide deacetylase.